The following is a 185-amino-acid chain: Ribosome-recycling factor (185 aa).

This sequence belongs to the RRF family.

The protein localises to the cytoplasm. Functionally, responsible for the release of ribosomes from messenger RNA at the termination of protein biosynthesis. May increase the efficiency of translation by recycling ribosomes from one round of translation to another. This is Ribosome-recycling factor from Methylococcus capsulatus (strain ATCC 33009 / NCIMB 11132 / Bath).